A 396-amino-acid chain; its full sequence is Deoxyguanosinetriphosphate triphosphohydrolase-like protein (396 aa).

An HD domain is found at Arg-69–Asn-211.

Belongs to the dGTPase family. Type 2 subfamily.

The sequence is that of Deoxyguanosinetriphosphate triphosphohydrolase-like protein from Parvibaculum lavamentivorans (strain DS-1 / DSM 13023 / NCIMB 13966).